The sequence spans 357 residues: Peptide chain release factor 1 (357 aa).

Residue Gln233 is modified to N5-methylglutamine.

It belongs to the prokaryotic/mitochondrial release factor family. In terms of processing, methylated by PrmC. Methylation increases the termination efficiency of RF1.

It is found in the cytoplasm. Peptide chain release factor 1 directs the termination of translation in response to the peptide chain termination codons UAG and UAA. The sequence is that of Peptide chain release factor 1 from Leuconostoc citreum (strain KM20).